We begin with the raw amino-acid sequence, 544 residues long: CTP synthase (544 aa).

An amidoligase domain region spans residues 1 to 266 (MIRYIFITGG…DSEVLSHFGI (266 aa)). Serine 13 is a CTP binding site. Residue serine 13 participates in UTP binding. Residues 14 to 19 (SLGKGI) and aspartate 71 each bind ATP. Positions 71 and 140 each coordinate Mg(2+). CTP is bound by residues 147 to 149 (DIE), 187 to 192 (KTKPTQ), and lysine 223. Residues 187 to 192 (KTKPTQ) and lysine 223 contribute to the UTP site. 239-241 (RDV) lines the ATP pocket. The 252-residue stretch at 292-543 (TIGLVGKYTD…IAAAVKQSRL (252 aa)) folds into the Glutamine amidotransferase type-1 domain. Residue glycine 355 coordinates L-glutamine. Cysteine 382 serves as the catalytic Nucleophile; for glutamine hydrolysis. L-glutamine contacts are provided by residues 383-386 (YGMQ), glutamate 406, and arginine 471. Active-site residues include histidine 516 and glutamate 518.

This sequence belongs to the CTP synthase family. Homotetramer.

It carries out the reaction UTP + L-glutamine + ATP + H2O = CTP + L-glutamate + ADP + phosphate + 2 H(+). The enzyme catalyses L-glutamine + H2O = L-glutamate + NH4(+). The catalysed reaction is UTP + NH4(+) + ATP = CTP + ADP + phosphate + 2 H(+). The protein operates within pyrimidine metabolism; CTP biosynthesis via de novo pathway; CTP from UDP: step 2/2. Its activity is regulated as follows. Allosterically activated by GTP, when glutamine is the substrate; GTP has no effect on the reaction when ammonia is the substrate. The allosteric effector GTP functions by stabilizing the protein conformation that binds the tetrahedral intermediate(s) formed during glutamine hydrolysis. Inhibited by the product CTP, via allosteric rather than competitive inhibition. Its function is as follows. Catalyzes the ATP-dependent amination of UTP to CTP with either L-glutamine or ammonia as the source of nitrogen. Regulates intracellular CTP levels through interactions with the four ribonucleotide triphosphates. This is CTP synthase from Hyphomonas neptunium (strain ATCC 15444).